Reading from the N-terminus, the 526-residue chain is Cytochrome P450 monooxygenase COX2 (526 aa).

Asn11 is a glycosylation site (N-linked (GlcNAc...) asparagine). The helical transmembrane segment at 12-31 (ITTNHVAAAVCAGIAVYAIV) threads the bilayer. A glycan (N-linked (GlcNAc...) asparagine) is linked at Asn302. Residue Cys450 participates in heme binding.

The protein belongs to the cytochrome P450 family. The cofactor is heme.

It is found in the membrane. It functions in the pathway secondary metabolite biosynthesis. Its function is as follows. Cytochrome P450 monooxygenase; part of the gene cluster that mediates the biosynthesis of alpha-cuprenene and oxidized derivatives. The alpha-cuprenene synthase COP6 is the only sesquiterpene synthase identified in C.cinereus that appears to be part of a biosynthetic gene cluster and is highly specific since it catalyzes the cyclization of (2E,6E)-farnesyl diphosphate into only one product, alpha-cuprenene. The cytochrome P450 monooxygenase COX2 then oxidizes the cyclohexadiene ring of alpha-cuprenene at positions 1 and 4, yielding first alpha-cuparene, followed by alpha-cuparophenol and a further yet unidentified compound resulting from one additional oxidation step. The cytochrome P450 monooxygenase COX1 then likely catalyzes the oxidation at position 9 of the pentane ring of alpha-cuprenene to give the corresponding hydroxy or ketone derivatives. The chain is Cytochrome P450 monooxygenase COX2 from Coprinopsis cinerea (strain Okayama-7 / 130 / ATCC MYA-4618 / FGSC 9003) (Inky cap fungus).